The following is a 305-amino-acid chain: tRNA pseudouridine synthase B (305 aa).

Asp-39 (nucleophile) is an active-site residue. The 69-residue stretch at 237–305 folds into the PUA domain; the sequence is LPVIIVPGEF…FLLKPHKVLK (69 aa).

It belongs to the pseudouridine synthase TruB family. Type 1 subfamily.

The enzyme catalyses uridine(55) in tRNA = pseudouridine(55) in tRNA. Its function is as follows. Responsible for synthesis of pseudouridine from uracil-55 in the psi GC loop of transfer RNAs. The sequence is that of tRNA pseudouridine synthase B from Moorella thermoacetica (strain ATCC 39073 / JCM 9320).